Here is a 356-residue protein sequence, read N- to C-terminus: Tyrosine recombinase XerS (356 aa).

The Core-binding (CB) domain maps to 16–121; it reads TMPWYILEYY…ALSSLYKYLT (106 aa). Residues 169-354 form the Tyr recombinase domain; the sequence is EFLQYIDTEY…VNDEQKNALD (186 aa). Residues R210, K234, H306, R309, and H332 contribute to the active site. Y341 serves as the catalytic O-(3'-phospho-DNA)-tyrosine intermediate.

It belongs to the 'phage' integrase family. XerS subfamily.

The protein localises to the cytoplasm. Its activity is regulated as follows. FtsK is required for recombination. In terms of biological role, site-specific tyrosine recombinase, which acts by catalyzing the cutting and rejoining of the recombining DNA molecules. Essential to convert dimers of the bacterial chromosome into monomers to permit their segregation at cell division. This Streptococcus sanguinis (strain SK36) protein is Tyrosine recombinase XerS.